A 589-amino-acid chain; its full sequence is ATP-dependent lipid A-core flippase (589 aa).

The next 5 helical transmembrane spans lie at 29 to 49 (LLLV…TGFL), 70 to 90 (WLPV…YITD), 157 to 177 (VIGA…TILV), 261 to 281 (MIGA…ALAG), and 283 to 303 (LTAG…PGLK). Residues 32 to 314 (VAALIAALIE…LTNVQNMVQR (283 aa)) form the ABC transmembrane type-1 domain. The ABC transporter domain maps to 346-582 (IEFRDVTARY…GGLYSHLHGM (237 aa)). 380-387 (GRSGSGKS) lines the ATP pocket.

It belongs to the ABC transporter superfamily. Lipid exporter (TC 3.A.1.106) family. Homodimer.

It is found in the cell inner membrane. It carries out the reaction ATP + H2O + lipid A-core oligosaccharideSide 1 = ADP + phosphate + lipid A-core oligosaccharideSide 2.. Its function is as follows. Involved in lipopolysaccharide (LPS) biosynthesis. Translocates lipid A-core from the inner to the outer leaflet of the inner membrane. Transmembrane domains (TMD) form a pore in the inner membrane and the ATP-binding domain (NBD) is responsible for energy generation. The polypeptide is ATP-dependent lipid A-core flippase (Xanthomonas oryzae pv. oryzae (strain MAFF 311018)).